The primary structure comprises 402 residues: uncharacterized protein (402 aa).

Topologically, residues 1–11 (MTPSNYQRTRW) are cytoplasmic. The helical transmembrane segment at 12 to 34 (LTLIGTIITQFALGSVYTWSLFN) threads the bilayer. Over 35-43 (GALSAKLDA) the chain is Periplasmic. A helical transmembrane segment spans residues 44–66 (PVSQVAFSFGLLSLGLAISSSVA). Residues 67 to 72 (GKLQER) lie on the Cytoplasmic side of the membrane. The chain crosses the membrane as a helical span at residues 73-95 (FGVKRVTMASGILLGLGFFLTAH). Residues 96–99 (SDNL) lie on the Periplasmic side of the membrane. A helical transmembrane segment spans residues 100-122 (MMLWLSAGVLVGLADGAGYLLTL). Residues 123–134 (SNCVKWFPERKG) lie on the Cytoplasmic side of the membrane. A helical transmembrane segment spans residues 135–154 (LISAFAIGSYGLGSLGFKFI). Residues 155-168 (DTQLLETVGLEKTF) lie on the Periplasmic side of the membrane. Residues 169–186 (VIWGAIALLMIVFGATLM) traverse the membrane as a helical segment. The Cytoplasmic segment spans residues 187–216 (KDAPKQEVKTSNGVVEKDYTLAESMRKPQY). A helical membrane pass occupies residues 217–236 (WMLAVMFLTACMSGLYVIGV). Topologically, residues 237-250 (AKDIAQSLAHLDVV) are periplasmic. The helical transmembrane segment at 251–273 (SAANAVTVISIANLSGRLVLGIL) threads the bilayer. Topologically, residues 274 to 279 (SDKIAR) are cytoplasmic. Residues 280-302 (IRVITIGQVISLVGMAALLFAPL) traverse the membrane as a helical segment. Over 303–306 (NAVT) the chain is Periplasmic. The helical transmembrane segment at 307-329 (FFAAIACVAFNFGGTITVFPSLV) threads the bilayer. The Cytoplasmic segment spans residues 330 to 341 (SEFFGLNNLAKN). The helical transmembrane segment at 342 to 364 (YGVIYLGFGIGSICGSIIASLFG) threads the bilayer. The Periplasmic segment spans residues 365-367 (GFY). The helical transmembrane segment at 368 to 387 (VTFYVIFALLILSLALSTTI) threads the bilayer. The Cytoplasmic portion of the chain corresponds to 388 to 402 (RQPEQKMLREAHGSL).

It belongs to the major facilitator superfamily. As to quaternary structure, interacts with BtsS and YpdA.

It localises to the cell inner membrane. Part of a nutrient-sensing regulatory network composed of the two-component regulatory systems BtsS/BtsR and YpdA/YpdB, and their respective target proteins, BtsT and YhjX. This is an uncharacterized protein from Escherichia coli (strain K12).